Consider the following 35-residue polypeptide: Kappa-theraphotoxin-Gr1b (35 aa).

3 cysteine pairs are disulfide-bonded: Cys2/Cys16, Cys9/Cys21, and Cys15/Cys28. Residues 4–6 (YLF) are involved in active face.

The protein belongs to the neurotoxin 10 (Hwtx-1) family. 09 (HaTx) subfamily. As to expression, expressed by the venom gland.

The protein localises to the secreted. In terms of biological role, inhibitor of voltage-gated potassium channels. Inhibits Kv2.1/KCNB1 channels, by shifting activation of the channel to more depolarized voltages. The toxin binding sites may be situated on the S3-S4 extracellular linker of the channel. One, two, three or four toxin molecules may bind the Kv2.1/KCNB1 channel. May need to partition into the membrane in order to bind to the channel. Antibacterial activity is not observed. This is Kappa-theraphotoxin-Gr1b from Grammostola rosea (Chilean rose tarantula).